A 256-amino-acid chain; its full sequence is 5'-nucleotidase SurE (256 aa).

4 residues coordinate a divalent metal cation: Asp-9, Asp-10, Ser-42, and Asn-99.

It belongs to the SurE nucleotidase family. Requires a divalent metal cation as cofactor.

Its subcellular location is the cytoplasm. The enzyme catalyses a ribonucleoside 5'-phosphate + H2O = a ribonucleoside + phosphate. Nucleotidase that shows phosphatase activity on nucleoside 5'-monophosphates. This Symbiobacterium thermophilum (strain DSM 24528 / JCM 14929 / IAM 14863 / T) protein is 5'-nucleotidase SurE.